Consider the following 511-residue polypeptide: UDP-N-acetylhexosamine pyrophosphorylase-like protein 1 (511 aa).

Residues 1 to 19 (MDRSESAESAESRRRRAEE) show a composition bias toward basic and acidic residues. The interval 1–22 (MDRSESAESAESRRRRAEESGQ) is disordered. Positions 117 to 120 (LAGG) match the Substrate binding motif. UTP is bound by residues 117–120 (LAGG), K131, Q205, and G231. Position 232 (N232) interacts with substrate. Residue D262 coordinates UTP. The Substrate binding motif lies at 312-313 (EY). K386 provides a ligand contact to UTP. K416 contributes to the substrate binding site.

The protein belongs to the UDPGP type 1 family.

The sequence is that of UDP-N-acetylhexosamine pyrophosphorylase-like protein 1 (uap1l1) from Xenopus tropicalis (Western clawed frog).